Consider the following 341-residue polypeptide: L-threonine 3-dehydrogenase (341 aa).

Residue cysteine 38 coordinates Zn(2+). Catalysis depends on charge relay system residues threonine 40 and histidine 43. Positions 63, 64, 93, 96, 99, and 107 each coordinate Zn(2+). NAD(+) is bound by residues isoleucine 175, aspartate 195, arginine 200, 262–264 (LGI), and 286–287 (IY).

It belongs to the zinc-containing alcohol dehydrogenase family. In terms of assembly, homotetramer. It depends on Zn(2+) as a cofactor.

The protein resides in the cytoplasm. It catalyses the reaction L-threonine + NAD(+) = (2S)-2-amino-3-oxobutanoate + NADH + H(+). Its pathway is amino-acid degradation; L-threonine degradation via oxydo-reductase pathway; glycine from L-threonine: step 1/2. Its function is as follows. Catalyzes the NAD(+)-dependent oxidation of L-threonine to 2-amino-3-ketobutyrate. This chain is L-threonine 3-dehydrogenase, found in Photorhabdus laumondii subsp. laumondii (strain DSM 15139 / CIP 105565 / TT01) (Photorhabdus luminescens subsp. laumondii).